The sequence spans 360 residues: Phospho-N-acetylmuramoyl-pentapeptide-transferase (360 aa).

A run of 10 helical transmembrane segments spans residues 21–41, 73–93, 94–114, 132–152, 168–188, 199–219, 239–259, 263–283, 288–308, and 338–358; these read YLSFRAIASILTALCLSLWMG, TMGGVMILAAIIITVLMWADL, SNPYVWAVLVVLAGYGAVGFV, WKYFWQSAIALVVAFALYAHG, VMPQLGLLYIVLTYFVIVGTS, GLAIMPTVMVAAGFAVIAWAT, LVVVCTAIVGAGLGFLWFNTY, VFMGDVGSLALGGALGVIAVL, LVLVIMGGVFVMETLSVILQV, and VIVRFWIISMVLVLVGLATLK.

The protein belongs to the glycosyltransferase 4 family. MraY subfamily. It depends on Mg(2+) as a cofactor.

It is found in the cell inner membrane. It catalyses the reaction UDP-N-acetyl-alpha-D-muramoyl-L-alanyl-gamma-D-glutamyl-meso-2,6-diaminopimeloyl-D-alanyl-D-alanine + di-trans,octa-cis-undecaprenyl phosphate = di-trans,octa-cis-undecaprenyl diphospho-N-acetyl-alpha-D-muramoyl-L-alanyl-D-glutamyl-meso-2,6-diaminopimeloyl-D-alanyl-D-alanine + UMP. The protein operates within cell wall biogenesis; peptidoglycan biosynthesis. Catalyzes the initial step of the lipid cycle reactions in the biosynthesis of the cell wall peptidoglycan: transfers peptidoglycan precursor phospho-MurNAc-pentapeptide from UDP-MurNAc-pentapeptide onto the lipid carrier undecaprenyl phosphate, yielding undecaprenyl-pyrophosphoryl-MurNAc-pentapeptide, known as lipid I. The chain is Phospho-N-acetylmuramoyl-pentapeptide-transferase from Vibrio atlanticus (strain LGP32) (Vibrio splendidus (strain Mel32)).